A 219-amino-acid chain; its full sequence is Lipid transferase CIDEA (219 aa).

The CIDE-N domain maps to 33-110 (PARPFRVSNH…ILEKGQKWMP (78 aa)). The interval 163–180 (CTGLKGLLRSLLRFLSYS) is amphipathic helix.

It belongs to the CIDE family. In terms of assembly, homodimer. Interacts with CIDEC. Directly interacts with CEBPB. Interacts with isoform CLSTN3beta of CLSTN3; inhibiting the lipid transferase activity of CIDEA. As to expression, expressed in omental and subcutaneous adipose tissue (at protein level).

It localises to the lipid droplet. The protein resides in the nucleus. It carries out the reaction a triacyl-sn-glycerol(in) = a triacyl-sn-glycerol(out). In terms of biological role, lipid transferase that promotes unilocular lipid droplet formation by mediating lipid droplet fusion. Lipid droplet fusion promotes their enlargement, restricting lipolysis and favoring lipid storage. Localizes on the lipid droplet surface, at focal contact sites between lipid droplets, and mediates atypical lipid droplet fusion by promoting directional net neutral lipid transfer from the smaller to larger lipid droplets. The transfer direction may be driven by the internal pressure difference between the contacting lipid droplet pair and occurs at a lower rate than that promoted by CIDEC. May also act as a CEBPB coactivator in epithelial cells to control the expression of a subset of CEBPB downstream target genes, including ID2, IGF1, PRLR, SOCS1, SOCS3, XDH, but not casein. By interacting with CEBPB, strengthens the association of CEBPB with the XDH promoter, increases histone acetylation and dissociates HDAC1 from the promoter. When overexpressed, induces apoptosis; the physiological significance of its role in apoptosis is unclear. The sequence is that of Lipid transferase CIDEA from Homo sapiens (Human).